The following is a 245-amino-acid chain: 4-hydroxy-tetrahydrodipicolinate reductase (245 aa).

NAD(+)-binding positions include 7 to 12 (GAKGKV), 75 to 77 (GTT), and 102 to 105 (APNF). His132 acts as the Proton donor/acceptor in catalysis. (S)-2,3,4,5-tetrahydrodipicolinate is bound at residue His133. Residue Lys136 is the Proton donor of the active site. 142–143 (GT) serves as a coordination point for (S)-2,3,4,5-tetrahydrodipicolinate.

Belongs to the DapB family.

The protein resides in the cytoplasm. It carries out the reaction (S)-2,3,4,5-tetrahydrodipicolinate + NAD(+) + H2O = (2S,4S)-4-hydroxy-2,3,4,5-tetrahydrodipicolinate + NADH + H(+). It catalyses the reaction (S)-2,3,4,5-tetrahydrodipicolinate + NADP(+) + H2O = (2S,4S)-4-hydroxy-2,3,4,5-tetrahydrodipicolinate + NADPH + H(+). The protein operates within amino-acid biosynthesis; L-lysine biosynthesis via DAP pathway; (S)-tetrahydrodipicolinate from L-aspartate: step 4/4. Catalyzes the conversion of 4-hydroxy-tetrahydrodipicolinate (HTPA) to tetrahydrodipicolinate. The chain is 4-hydroxy-tetrahydrodipicolinate reductase from Mycolicibacterium gilvum (strain PYR-GCK) (Mycobacterium gilvum (strain PYR-GCK)).